The following is a 311-amino-acid chain: Putative mitochondrial transporter UCP3 (311 aa).

The Mitochondrial intermembrane segment spans residues 1-10 (MVGLKPSEVP). A helical transmembrane segment spans residues 11 to 32 (PTTAVKFLGAGTAACFADLLTF). Solcar repeat units follow at residues 11–105 (PTTA…VKQF), 114–205 (SSIT…IKEK), and 214–299 (DNFP…LKRA). Over 33–76 (PLDTAKVRLQIQGENQATQAARRIQYRGVLGTILTMVRTEGPRS) the chain is Mitochondrial matrix. Residues 77–99 (PYNGLVAGLQRQMSFASIRIGLY) traverse the membrane as a helical segment. Residues 100-119 (DSVKQFYTPKGSDHSSITTR) lie on the Mitochondrial intermembrane side of the membrane. A helical transmembrane segment spans residues 120–136 (ILAGCTTGAMAVSCAQP). Residues 137 to 182 (TDVVKVRFQASIHLGAGSNRKYSGTMDAYRTIAREEGVRGLWKGTL) lie on the Mitochondrial matrix side of the membrane. The chain crosses the membrane as a helical span at residues 183–199 (PNITRNAIVNCAEMVTY). The Mitochondrial intermembrane segment spans residues 200–216 (DIIKEKLLDYHLLTDNF). A helical transmembrane segment spans residues 217–236 (PCHLISAFGAGFCATVVASP). Over 237–270 (VDVVKTRYMNSPPGQYCSPLDCMLKMVTQEGPTA) the chain is Mitochondrial matrix. The chain crosses the membrane as a helical span at residues 271-293 (FYKGFTPSFLRLGTWNVVMFVTY). Residues 278–300 (SFLRLGTWNVVMFVTYEQLKRAL) form a purine nucleotide binding region. Residues 294–311 (EQLKRALMKVQMLRESPF) are Mitochondrial intermembrane-facing.

This sequence belongs to the mitochondrial carrier (TC 2.A.29) family. In terms of assembly, interacts with HAX1; the interaction is direct and calcium-dependent.

It localises to the mitochondrion inner membrane. Its function is as follows. Putative transmembrane transporter that plays a role in mitochondrial metabolism via an as yet unclear mechanism. Originally, this mitochondrial protein was thought to act as a proton transmembrane transporter from the mitochondrial intermembrane space into the matrix, causing proton leaks through the inner mitochondrial membrane, thereby uncoupling mitochondrial membrane potential generation from ATP synthesis. However, this function is controversial and uncoupling may not be the function, or at least not the main function, but rather a consequence of more conventional metabolite transporter activity. This chain is Putative mitochondrial transporter UCP3, found in Canis lupus familiaris (Dog).